A 101-amino-acid chain; its full sequence is NAD(P)H-quinone oxidoreductase subunit 4L, chloroplastic (101 aa).

The next 3 membrane-spanning stretches (helical) occupy residues 2–22 (MFEHVLFLSAYLFSIGIYGLI), 32–52 (MCLELILNSVNINLVTFSDLF), and 61–81 (IFSIFVIAIAAAEAAIGLAIV).

The protein belongs to the complex I subunit 4L family. In terms of assembly, NDH is composed of at least 16 different subunits, 5 of which are encoded in the nucleus.

It localises to the plastid. Its subcellular location is the chloroplast thylakoid membrane. The enzyme catalyses a plastoquinone + NADH + (n+1) H(+)(in) = a plastoquinol + NAD(+) + n H(+)(out). The catalysed reaction is a plastoquinone + NADPH + (n+1) H(+)(in) = a plastoquinol + NADP(+) + n H(+)(out). In terms of biological role, NDH shuttles electrons from NAD(P)H:plastoquinone, via FMN and iron-sulfur (Fe-S) centers, to quinones in the photosynthetic chain and possibly in a chloroplast respiratory chain. The immediate electron acceptor for the enzyme in this species is believed to be plastoquinone. Couples the redox reaction to proton translocation, and thus conserves the redox energy in a proton gradient. The polypeptide is NAD(P)H-quinone oxidoreductase subunit 4L, chloroplastic (Lemna minor (Common duckweed)).